A 96-amino-acid polypeptide reads, in one-letter code: Small ribosomal subunit protein bS16m (96 aa).

The protein belongs to the bacterial ribosomal protein bS16 family. In terms of assembly, component of the mitochondrial small ribosomal subunit (mt-SSU). Mature yeast 74S mitochondrial ribosomes consist of a small (37S) and a large (54S) subunit. The 37S small subunit contains a 15S ribosomal RNA (15S mt-rRNA) and at least 32 different proteins. The 54S large subunit contains a 21S rRNA (21S mt-rRNA) and at least 45 different proteins.

The protein localises to the mitochondrion. In terms of biological role, component of the mitochondrial ribosome (mitoribosome), a dedicated translation machinery responsible for the synthesis of mitochondrial genome-encoded proteins, including at least some of the essential transmembrane subunits of the mitochondrial respiratory chain. The mitoribosomes are attached to the mitochondrial inner membrane and translation products are cotranslationally integrated into the membrane. The sequence is that of Small ribosomal subunit protein bS16m (mrps16) from Schizosaccharomyces pombe (strain 972 / ATCC 24843) (Fission yeast).